Here is a 168-residue protein sequence, read N- to C-terminus: Phosphopantetheine adenylyltransferase (168 aa).

Serine 9 is a substrate binding site. ATP contacts are provided by residues 9–10 (SF) and histidine 17. Substrate contacts are provided by lysine 41, leucine 73, and arginine 87. Residues 88 to 90 (GLR), glutamate 98, and 123 to 129 (YAFLSSS) contribute to the ATP site.

Belongs to the bacterial CoaD family. As to quaternary structure, homohexamer. The cofactor is Mg(2+).

It localises to the cytoplasm. It catalyses the reaction (R)-4'-phosphopantetheine + ATP + H(+) = 3'-dephospho-CoA + diphosphate. It participates in cofactor biosynthesis; coenzyme A biosynthesis; CoA from (R)-pantothenate: step 4/5. Reversibly transfers an adenylyl group from ATP to 4'-phosphopantetheine, yielding dephospho-CoA (dPCoA) and pyrophosphate. The chain is Phosphopantetheine adenylyltransferase from Heliobacterium modesticaldum (strain ATCC 51547 / Ice1).